Reading from the N-terminus, the 158-residue chain is Trafficking protein particle complex subunit 6B (158 aa).

Belongs to the TRAPP small subunits family. BET3 subfamily. Homodimer. Part of a TRAPP complex. Heterodimer with TRAPPC3. The heterodimer TRAPPC6B-TRAPPC3 interacts with TRAPPC1 likely providing a core for TRAPP complex formation.

It localises to the golgi apparatus. The protein resides in the cis-Golgi network. Its subcellular location is the endoplasmic reticulum. Component of a transport protein particle (TRAPP) complex that may function in specific stages of inter-organelle traffic. Specifically involved in the early development of neural circuitry, likely by controlling the frequency and amplitude of intracellular calcium transients implicated in the regulation of neuron differentiation and survival. In Bos taurus (Bovine), this protein is Trafficking protein particle complex subunit 6B.